Here is a 391-residue protein sequence, read N- to C-terminus: MSKRRVVVGMSGGVDSSVTAWLLKEQGYDVVGLFMKNWEDDDDGEYCSTRQDWIDVVSVADLIGIDVEAVNFAAEYKDRVFAEFLREYSAGRTPNPDVLCNAEIKFKAFLDHAMSLDAEMIATGHYARVRERDGRFELLKAFDHTKDQSYFLHRLNQAQLSKTMFPLGEIPKTKVREIAAQIGLPNAKKKDSTGICFIGERPFRDFLNRYLPTKPGPMKTPDGKVVGEHIGLAFYTFGQRKGIGLGGSKSGSGEPWFVAAKDIASNTLYVVQGHDHPWLLSRELVAGNVSWVAGEPPADGFACGAKTRYRQADAACVFGLAATGAEAAGPAGEARFSLAFDDAQWAVTPGQSAVLYDGEICLGGGIIESAATGQPGQATSTGHAPALAEAR.

ATP is bound by residues 9–16 and Met35; that span reads GMSGGVDS. Positions 95 to 97 are interaction with target base in tRNA; it reads NPD. Cys100 serves as the catalytic Nucleophile. A disulfide bridge links Cys100 with Cys196. Gly124 is an ATP binding site. Residues 146 to 148 form an interaction with tRNA region; it reads KDQ. Cys196 acts as the Cysteine persulfide intermediate in catalysis. The interval 308–309 is interaction with tRNA; that stretch reads RY. Residues 372–382 show a composition bias toward polar residues; that stretch reads TGQPGQATSTG. The disordered stretch occupies residues 372–391; it reads TGQPGQATSTGHAPALAEAR.

This sequence belongs to the MnmA/TRMU family.

The protein resides in the cytoplasm. The enzyme catalyses S-sulfanyl-L-cysteinyl-[protein] + uridine(34) in tRNA + AH2 + ATP = 2-thiouridine(34) in tRNA + L-cysteinyl-[protein] + A + AMP + diphosphate + H(+). Its function is as follows. Catalyzes the 2-thiolation of uridine at the wobble position (U34) of tRNA, leading to the formation of s(2)U34. The protein is tRNA-specific 2-thiouridylase MnmA of Burkholderia cenocepacia (strain ATCC BAA-245 / DSM 16553 / LMG 16656 / NCTC 13227 / J2315 / CF5610) (Burkholderia cepacia (strain J2315)).